We begin with the raw amino-acid sequence, 129 residues long: Phosphoribosyl-AMP cyclohydrolase (129 aa).

D78 is a Mg(2+) binding site. C79 is a Zn(2+) binding site. D80 and D82 together coordinate Mg(2+). Positions 96 and 103 each coordinate Zn(2+).

It belongs to the PRA-CH family. As to quaternary structure, homodimer. Mg(2+) is required as a cofactor. Zn(2+) serves as cofactor.

It localises to the cytoplasm. The enzyme catalyses 1-(5-phospho-beta-D-ribosyl)-5'-AMP + H2O = 1-(5-phospho-beta-D-ribosyl)-5-[(5-phospho-beta-D-ribosylamino)methylideneamino]imidazole-4-carboxamide. It participates in amino-acid biosynthesis; L-histidine biosynthesis; L-histidine from 5-phospho-alpha-D-ribose 1-diphosphate: step 3/9. Functionally, catalyzes the hydrolysis of the adenine ring of phosphoribosyl-AMP. This is Phosphoribosyl-AMP cyclohydrolase from Nitrosomonas europaea (strain ATCC 19718 / CIP 103999 / KCTC 2705 / NBRC 14298).